The sequence spans 438 residues: Adenosylhomocysteinase (438 aa).

Residues Thr-61, Asp-137, and Glu-162 each coordinate substrate. 163 to 165 is a binding site for NAD(+); sequence TTT. Residues Lys-192 and Asp-196 each coordinate substrate. Residues Asn-197, 226–231, Glu-249, Asn-284, 305–307, and Asn-352 contribute to the NAD(+) site; these read GYGDVG and IGH.

Belongs to the adenosylhomocysteinase family. NAD(+) is required as a cofactor.

It is found in the cytoplasm. It carries out the reaction S-adenosyl-L-homocysteine + H2O = L-homocysteine + adenosine. It functions in the pathway amino-acid biosynthesis; L-homocysteine biosynthesis; L-homocysteine from S-adenosyl-L-homocysteine: step 1/1. May play a key role in the regulation of the intracellular concentration of adenosylhomocysteine. The protein is Adenosylhomocysteinase of Christiangramia forsetii (strain DSM 17595 / CGMCC 1.15422 / KT0803) (Gramella forsetii).